The chain runs to 427 residues: 5-hydroxybenzimidazole synthase BzaA (427 aa).

It belongs to the ThiC family. 5-hydroxybenzimidazole synthase subfamily. The cofactor is [4Fe-4S] cluster.

It catalyses the reaction 5-amino-1-(5-phospho-beta-D-ribosyl)imidazole + AH2 + S-adenosyl-L-methionine = 5-hydroxybenzimidazole + 5'-deoxyadenosine + formate + L-methionine + A + NH4(+) + phosphate + 2 H(+). The protein operates within cofactor biosynthesis; adenosylcobalamin biosynthesis. Functionally, together with BzaB, catalyzes the conversion of aminoimidazole ribotide (AIR) to 5-hydroxybenzimidazole (5-HBI) in a radical S-adenosyl-L-methionine (SAM)-dependent reaction. Is thus involved in the anaerobic biosynthesis of dimethylbenzimidazole (DMB), the lower axial ligand of vitamin B12 (cobalamin). Requires BzaB for catalytic activity, as BzaA alone displays no activity. The sequence is that of 5-hydroxybenzimidazole synthase BzaA from Eubacterium limosum.